A 434-amino-acid chain; its full sequence is Serine hydroxymethyltransferase (434 aa).

(6S)-5,6,7,8-tetrahydrofolate is bound by residues leucine 133 and 137–139; that span reads GHL. An N6-(pyridoxal phosphate)lysine modification is found at lysine 242.

It belongs to the SHMT family. In terms of assembly, homodimer. The cofactor is pyridoxal 5'-phosphate.

It localises to the cytoplasm. The enzyme catalyses (6R)-5,10-methylene-5,6,7,8-tetrahydrofolate + glycine + H2O = (6S)-5,6,7,8-tetrahydrofolate + L-serine. The protein operates within one-carbon metabolism; tetrahydrofolate interconversion. It functions in the pathway amino-acid biosynthesis; glycine biosynthesis; glycine from L-serine: step 1/1. In terms of biological role, catalyzes the reversible interconversion of serine and glycine with tetrahydrofolate (THF) serving as the one-carbon carrier. This reaction serves as the major source of one-carbon groups required for the biosynthesis of purines, thymidylate, methionine, and other important biomolecules. Also exhibits THF-independent aldolase activity toward beta-hydroxyamino acids, producing glycine and aldehydes, via a retro-aldol mechanism. This is Serine hydroxymethyltransferase from Caulobacter sp. (strain K31).